Reading from the N-terminus, the 428-residue chain is Septin homolog spn7 (428 aa).

The Septin-type G domain occupies 15-290 (KGKKLRIMVA…ENYRTEKLSN (276 aa)). The tract at residues 25–32 (GSSYTSYQ) is G1 motif. GTP is bound by residues 25-32 (GSSYTSYQ), Gly86, 166-174 (NSNAFTEEE), and Gly224. Residues 83–86 (EVNG) are G3 motif. The interval 165 to 168 (GNSN) is G4 motif. Disordered stretches follow at residues 287-345 (KLSN…SEEL) and 387-414 (KEFP…KKMD). A compositionally biased stretch (polar residues) spans 290-307 (NDSPSNTSLSLQKQNSIV). The segment covering 309–325 (NEDKRSVNGSERTETRS) has biased composition (basic and acidic residues). Composition is skewed to polar residues over residues 326–339 (SIDQ…VSDS) and 392–405 (RTTS…NNTT).

Belongs to the TRAFAC class TrmE-Era-EngA-EngB-Septin-like GTPase superfamily. Septin GTPase family. As to quaternary structure, component of the sporulation-specific septin complex composed of at least spn2, spn5, spn6 and spn7.

The protein resides in the cytoplasm. It is found in the nucleus. The protein localises to the forespore membrane. Its function is as follows. Septin-like protein involved in the correct orientation of forespore membrane extension during sporulation. Binds phosphatidylinositol 4-phosphate. This chain is Septin homolog spn7 (spn7), found in Schizosaccharomyces pombe (strain 972 / ATCC 24843) (Fission yeast).